Reading from the N-terminus, the 312-residue chain is Pantothenate kinase (312 aa).

97–104 (GSVAVGKS) serves as a coordination point for ATP.

Belongs to the prokaryotic pantothenate kinase family.

The protein resides in the cytoplasm. It carries out the reaction (R)-pantothenate + ATP = (R)-4'-phosphopantothenate + ADP + H(+). It participates in cofactor biosynthesis; coenzyme A biosynthesis; CoA from (R)-pantothenate: step 1/5. This is Pantothenate kinase from Mycolicibacterium gilvum (strain PYR-GCK) (Mycobacterium gilvum (strain PYR-GCK)).